A 122-amino-acid chain; its full sequence is Large ribosomal subunit protein uL18 (122 aa).

It belongs to the universal ribosomal protein uL18 family. As to quaternary structure, part of the 50S ribosomal subunit; part of the 5S rRNA/L5/L18/L25 subcomplex. Contacts the 5S and 23S rRNAs.

This is one of the proteins that bind and probably mediate the attachment of the 5S RNA into the large ribosomal subunit, where it forms part of the central protuberance. This Pseudothermotoga lettingae (strain ATCC BAA-301 / DSM 14385 / NBRC 107922 / TMO) (Thermotoga lettingae) protein is Large ribosomal subunit protein uL18.